The primary structure comprises 314 residues: Ribosomal RNA small subunit methyltransferase H (314 aa).

S-adenosyl-L-methionine-binding positions include 36-38 (AGH), aspartate 56, phenylalanine 83, aspartate 104, and glutamine 111.

The protein belongs to the methyltransferase superfamily. RsmH family.

Its subcellular location is the cytoplasm. The catalysed reaction is cytidine(1402) in 16S rRNA + S-adenosyl-L-methionine = N(4)-methylcytidine(1402) in 16S rRNA + S-adenosyl-L-homocysteine + H(+). Specifically methylates the N4 position of cytidine in position 1402 (C1402) of 16S rRNA. The protein is Ribosomal RNA small subunit methyltransferase H of Brevibacillus brevis (strain 47 / JCM 6285 / NBRC 100599).